The chain runs to 308 residues: Methionine synthase (308 aa).

Positions 192, 194, 215, and 282 each coordinate Zn(2+).

It belongs to the archaeal MetE family. It depends on Zn(2+) as a cofactor.

It participates in amino-acid biosynthesis; L-methionine biosynthesis via de novo pathway. In terms of biological role, catalyzes the transfer of a methyl group to L-homocysteine resulting in methionine formation. Can use methylcobalamin and methylcobinamide as methyl donors, but methylcobalamin is not considered to be the physiological substrate. This is Methionine synthase from Methanocaldococcus jannaschii (strain ATCC 43067 / DSM 2661 / JAL-1 / JCM 10045 / NBRC 100440) (Methanococcus jannaschii).